A 280-amino-acid polypeptide reads, in one-letter code: Tryptophan synthase alpha chain (280 aa).

Catalysis depends on proton acceptor residues glutamate 50 and aspartate 61.

This sequence belongs to the TrpA family. In terms of assembly, tetramer of two alpha and two beta chains.

The catalysed reaction is (1S,2R)-1-C-(indol-3-yl)glycerol 3-phosphate + L-serine = D-glyceraldehyde 3-phosphate + L-tryptophan + H2O. It functions in the pathway amino-acid biosynthesis; L-tryptophan biosynthesis; L-tryptophan from chorismate: step 5/5. In terms of biological role, the alpha subunit is responsible for the aldol cleavage of indoleglycerol phosphate to indole and glyceraldehyde 3-phosphate. The sequence is that of Tryptophan synthase alpha chain from Methylorubrum extorquens (strain CM4 / NCIMB 13688) (Methylobacterium extorquens).